The sequence spans 493 residues: Dipeptide permease D (493 aa).

13 helical membrane passes run valine 14–leucine 34, glutamate 49–alanine 69, leucine 91–valine 111, glycine 138–cysteine 158, tryptophan 167–cysteine 187, asparagine 212–tryptophan 232, tryptophan 235–tyrosine 255, leucine 267–glycine 287, methionine 312–valine 332, isoleucine 344–leucine 364, leucine 379–methionine 399, valine 413–isoleucine 433, and valine 458–leucine 478.

This sequence belongs to the major facilitator superfamily. Proton-dependent oligopeptide transporter (POT/PTR) (TC 2.A.17) family. DtpD subfamily.

The protein resides in the cell inner membrane. Functionally, probable proton-dependent permease that transports dipeptides. This Salmonella typhimurium (strain 14028s / SGSC 2262) protein is Dipeptide permease D.